The chain runs to 388 residues: Succinate--CoA ligase [ADP-forming] subunit beta (388 aa).

The 236-residue stretch at 9 to 244 (KQLFAEYGLP…PSQDDAREAH (236 aa)) folds into the ATP-grasp domain. Residues Lys46, 53 to 55 (GRG), Glu99, Thr102, and Glu107 contribute to the ATP site. Positions 199 and 213 each coordinate Mg(2+). Substrate-binding positions include Asn264 and 321–323 (GIV).

This sequence belongs to the succinate/malate CoA ligase beta subunit family. In terms of assembly, heterotetramer of two alpha and two beta subunits. Mg(2+) is required as a cofactor.

The enzyme catalyses succinate + ATP + CoA = succinyl-CoA + ADP + phosphate. It carries out the reaction GTP + succinate + CoA = succinyl-CoA + GDP + phosphate. It functions in the pathway carbohydrate metabolism; tricarboxylic acid cycle; succinate from succinyl-CoA (ligase route): step 1/1. Succinyl-CoA synthetase functions in the citric acid cycle (TCA), coupling the hydrolysis of succinyl-CoA to the synthesis of either ATP or GTP and thus represents the only step of substrate-level phosphorylation in the TCA. The beta subunit provides nucleotide specificity of the enzyme and binds the substrate succinate, while the binding sites for coenzyme A and phosphate are found in the alpha subunit. The polypeptide is Succinate--CoA ligase [ADP-forming] subunit beta (Pseudomonas entomophila (strain L48)).